The sequence spans 96 residues: MF6 protein (96 aa).

This Myxoma virus (strain Uriarra) (MYXV) protein is MF6 protein.